A 267-amino-acid chain; its full sequence is uncharacterized protein (267 aa).

The protein belongs to the lin-8 family.

This is an uncharacterized protein from Caenorhabditis elegans.